The following is a 279-amino-acid chain: MALKSYKPTTPGQRGLVLIDRSELWKGRPVKSLTEGLTKNGGRNNTGRITMRRKGGGAKRLYRIVDFKRTKFDVSATVERIEYDPNRTAFIALIKYEDGEQAYILAPQRLAVGDKVIAGAKVDVKPGNAMPFSGMPIGTIVHNVELKPGKGGQIARSAGTYAQFVGRDGGYAQIRLSSGELRLVRQECMATIGAVSNSDHSNQNFGKAGRNRHKGIRPSVRGVAMNPIDHPHGGGEGRTSGGRHPVTPWGKGTKGTRTRSNKSTDKYILRSRHAKKKGR.

The disordered stretch occupies residues 223–279 (VAMNPIDHPHGGGEGRTSGGRHPVTPWGKGTKGTRTRSNKSTDKYILRSRHAKKKGR). A compositionally biased stretch (basic residues) spans 269-279 (LRSRHAKKKGR).

This sequence belongs to the universal ribosomal protein uL2 family. In terms of assembly, part of the 50S ribosomal subunit. Forms a bridge to the 30S subunit in the 70S ribosome.

Its function is as follows. One of the primary rRNA binding proteins. Required for association of the 30S and 50S subunits to form the 70S ribosome, for tRNA binding and peptide bond formation. It has been suggested to have peptidyltransferase activity; this is somewhat controversial. Makes several contacts with the 16S rRNA in the 70S ribosome. The chain is Large ribosomal subunit protein uL2 from Paracoccus denitrificans (strain Pd 1222).